The following is a 118-amino-acid chain: U16-barytoxin-Tl1c (118 aa).

The signal sequence occupies residues 1-16 (MKTIIVFLSFLVLVLA). The propeptide occupies 17–76 (TKFGDANEGVNREQTKEVIQNEFRGDFLNEMAAMSLLQQLEAIESALLEKEADRNSRQKR). 3 disulfide bridges follow: Cys77–Cys92, Cys84–Cys97, and Cys91–Cys112.

Belongs to the neurotoxin 14 (magi-1) family. 06 (ICK-Trit) subfamily. In terms of tissue distribution, expressed by the venom gland.

Its subcellular location is the secreted. Ion channel inhibitor. The polypeptide is U16-barytoxin-Tl1c (Trittame loki (Brush-footed trapdoor spider)).